Consider the following 608-residue polypeptide: MEAPAVCLLPLLLLLWAWAPAPGRASPEALPLVNEDVKRTVDLSSHLAKVTAEVVLAHAGSSSSPRAASFLLALEPELEARLAHLGVQVKGEDEEENNLEVRETKIKGKRGRFFTVTLPVALDPGAKISVTVETVYTHVLQPYPTQITQSEKQFVVFEGNHYFYSPYPTKSQSMRVKLASRNVESYTKLGNPTRSEDLLDYGPFRDVPPYSQDTFKVHSENNSPFLTITSMTRVIEVSHWGNIAVEENVDLKHTGAVLKGPFSRYDYQRQPDSGISSIRSFKTILPAAAQDVYYRDEIGNVSTSHLLILDDSVEMEIRPRFPLFGGWKTHYIVGYNLPSYEYLYNLGDQYALKMRLVDHVFDEQVIDSLTVKIILPEGAKNIQVDSPYEISRAPDELHYTYLDTFGRPVIVAHKKNLVEQHIQDIVVHYTFNKVLMLQEPLLVVAAFYILFFTVIVYVRLDFSITKDPAAEARMKVACITEQVLTLVNKRIGLYRHFDETINRYKQSRDVSTLNSGKKSLELEHKALTSEVALLQSRLKTEGSDLCDKVSEMQKLDAQVKELVLKSAVEAERLVAGKLKKDTYIENEKLISGKRQELVTKIDHILDAL.

The signal sequence occupies residues 1–24 (MEAPAVCLLPLLLLLWAWAPAPGR). At 25-435 (ASPEALPLVN…VVHYTFNKVL (411 aa)) the chain is on the lumenal side. Lys-188 carries the N6-acetyllysine modification. An N-linked (GlcNAc...) asparagine glycan is attached at Asn-300. Residues 436–456 (MLQEPLLVVAAFYILFFTVIV) form a helical membrane-spanning segment. The Cytoplasmic portion of the chain corresponds to 457–607 (YVRLDFSITK…VTKIDHILDA (151 aa)). An N6-acetyllysine; alternate modification is found at Lys-539. Residue Lys-539 forms a Glycyl lysine isopeptide (Lys-Gly) (interchain with G-Cter in SUMO2); alternate linkage.

This sequence belongs to the OST1 family. Component of the oligosaccharyltransferase (OST) complex. OST exists in two different complex forms which contain common core subunits RPN1, RPN2, OST48, OST4, DAD1 and TMEM258, either STT3A or STT3B as catalytic subunits, and form-specific accessory subunits. STT3A complex assembly occurs through the formation of 3 subcomplexes. Subcomplex 1 contains RPN1 and TMEM258, subcomplex 2 contains the STT3A-specific subunits STT3A, DC2/OSTC, and KCP2 as well as the core subunit OST4, and subcomplex 3 contains RPN2, DAD1, and OST48. The STT3A complex can form stable complexes with the Sec61 complex or with both the Sec61 and TRAP complexes. Interacts with TMEM35A/NACHO. In terms of processing, ubiquitinated by the ECS(ASB11) complex. Post-translationally, ufmylated by UFL1 in response to endoplasmic reticulum stress, promoting reticulophagy of endoplasmic reticulum sheets. In terms of tissue distribution, detected in liver (at protein level).

Its subcellular location is the endoplasmic reticulum membrane. It functions in the pathway protein modification; protein glycosylation. In terms of biological role, subunit of the oligosaccharyl transferase (OST) complex that catalyzes the initial transfer of a defined glycan (Glc(3)Man(9)GlcNAc(2) in eukaryotes) from the lipid carrier dolichol-pyrophosphate to an asparagine residue within an Asn-X-Ser/Thr consensus motif in nascent polypeptide chains, the first step in protein N-glycosylation. N-glycosylation occurs cotranslationally and the complex associates with the Sec61 complex at the channel-forming translocon complex that mediates protein translocation across the endoplasmic reticulum (ER). All subunits are required for a maximal enzyme activity. The protein is Dolichyl-diphosphooligosaccharide--protein glycosyltransferase subunit 1 of Sus scrofa (Pig).